The chain runs to 660 residues: Replication restart protein PriA (660 aa).

A Helicase ATP-binding domain is found at 145–313; that stretch reads IIGSEKTNVF…KNNQIKKIIM (169 aa). An ATP-binding site is contributed by 158–165; sequence GIPGSGKT. Residues 256–259 carry the DEAH box motif; sequence DEEH. C370, C373, C379, C382, C397, C400, C410, and C413 together coordinate Zn(2+). Residues 405–557 enclose the Helicase C-terminal domain; the sequence is KTASHCPQCE…QFYEEELDIR (153 aa).

Belongs to the helicase family. PriA subfamily. In terms of assembly, component of the replication restart primosome. The cofactor is Zn(2+).

It carries out the reaction Couples ATP hydrolysis with the unwinding of duplex DNA by translocating in the 3'-5' direction.. The catalysed reaction is ATP + H2O = ADP + phosphate + H(+). In terms of biological role, initiates the restart of stalled replication forks, which reloads the replicative helicase on sites other than the origin of replication. Recognizes and binds to abandoned replication forks and remodels them to uncover a helicase loading site. Promotes assembly of the primosome at these replication forks. This is Replication restart protein PriA from Borreliella burgdorferi (strain ATCC 35210 / DSM 4680 / CIP 102532 / B31) (Borrelia burgdorferi).